Reading from the N-terminus, the 421-residue chain is F-box only protein 9 (421 aa).

The segment at Met1–Ala63 is disordered. Acidic residues predominate over residues Ala11–Thr20. Polar residues predominate over residues Leu40–Arg52. Residues Ala54–Ala63 are compositionally biased toward basic and acidic residues. One copy of the TPR repeat lies at Ala68–Ile101. The F-box domain occupies Gln158–Ala209.

As to quaternary structure, part of the SCF (SKP1-CUL1-F-box) E3 ubiquitin-protein ligase complex SCF(fbxo9).

It is found in the cytoplasm. It participates in protein modification; protein ubiquitination. Functionally, substrate recognition component of a SCF (SKP1-CUL1-F-box protein) E3 ubiquitin-protein ligase complex which mediates the ubiquitination and subsequent proteasomal degradation of target proteins and acts as a regulator of mTOR signaling. This is F-box only protein 9 (fbxo9) from Danio rerio (Zebrafish).